The following is an 844-amino-acid chain: DNA mismatch repair protein MutS (844 aa).

610–617 is a binding site for ATP; sequence GPNMGGKS.

This sequence belongs to the DNA mismatch repair MutS family.

Functionally, this protein is involved in the repair of mismatches in DNA. It is possible that it carries out the mismatch recognition step. This protein has a weak ATPase activity. The protein is DNA mismatch repair protein MutS of Francisella tularensis subsp. tularensis (strain WY96-3418).